The sequence spans 422 residues: 26S proteasome non-ATPase regulatory subunit 11 (422 aa).

The PCI domain maps to 224 to 392 (DWKTAYSYFY…GVLIIFDEPP (169 aa)).

This sequence belongs to the proteasome subunit S9 family. Component of the 19S proteasome regulatory particle complex. The 26S proteasome consists of a 20S core particle (CP) and two 19S regulatory subunits (RP). The regulatory particle is made of a lid composed of 9 subunits including PSMD11, a base containing 6 ATPases and few additional components.

The protein resides in the nucleus. It is found in the cytoplasm. Its subcellular location is the cytosol. Its function is as follows. Component of the 26S proteasome, a multiprotein complex involved in the ATP-dependent degradation of ubiquitinated proteins. This complex plays a key role in the maintenance of protein homeostasis by removing misfolded or damaged proteins, which could impair cellular functions, and by removing proteins whose functions are no longer required. Therefore, the proteasome participates in numerous cellular processes, including cell cycle progression, apoptosis, or DNA damage repair. In the complex, PSMD11 is required for proteasome assembly. Plays a key role in increased proteasome activity in embryonic stem cells (ESCs): its high expression in ESCs promotes enhanced assembly of the 26S proteasome, followed by higher proteasome activity. This Xenopus tropicalis (Western clawed frog) protein is 26S proteasome non-ATPase regulatory subunit 11 (psmd11).